Reading from the N-terminus, the 231-residue chain is Staphylococcal superantigen-like 7 (231 aa).

Residues 1 to 30 (MKLKTLAKATLALGLLTTGVITSEGQAVQA) form the signal peptide.

It belongs to the staphylococcal/streptococcal toxin family. In terms of assembly, interacts with host IgA and complement C5; these interactions inhibits complement activation.

It localises to the secreted. Functionally, plays a role in the inhibition of host complement-mediated lysis and serum bactericidal activity by interacting with complement component C5. Affects all three pathways of complement activation and inhibits the cleavage of C5 by preventing its binding to C5 convertases. In turn, prevents C5a-mediated neutrophil migration. The polypeptide is Staphylococcal superantigen-like 7 (Staphylococcus aureus (strain NCTC 8325 / PS 47)).